A 271-amino-acid polypeptide reads, in one-letter code: Phosphate import ATP-binding protein PstB 1 (271 aa).

The 242-residue stretch at 25-266 folds into the ABC transporter domain; the sequence is LTVEHLNLYY…PTQRRTEDYI (242 aa). 57 to 64 is an ATP binding site; that stretch reads GPSGCGKS.

Belongs to the ABC transporter superfamily. Phosphate importer (TC 3.A.1.7) family. The complex is composed of two ATP-binding proteins (PstB), two transmembrane proteins (PstC and PstA) and a solute-binding protein (PstS).

The protein resides in the cell inner membrane. The enzyme catalyses phosphate(out) + ATP + H2O = ADP + 2 phosphate(in) + H(+). Functionally, part of the ABC transporter complex PstSACB involved in phosphate import. Responsible for energy coupling to the transport system. This is Phosphate import ATP-binding protein PstB 1 from Pectobacterium atrosepticum (strain SCRI 1043 / ATCC BAA-672) (Erwinia carotovora subsp. atroseptica).